The following is a 117-amino-acid chain: Larval cuticle protein A2B (117 aa).

Copy 1 of the repeat occupies 12–15 (AAPV). In terms of domain architecture, Chitin-binding type R&amp;R spans 29–95 (HPQYQYGYDV…AVVHREPLVA (67 aa)). Repeat 2 spans residues 108 to 111 (AAPV).

Its function is as follows. Component of the cuticle of the larva of Tenebrio molitor. This is Larval cuticle protein A2B from Tenebrio molitor (Yellow mealworm beetle).